Reading from the N-terminus, the 659-residue chain is Protein NEDD1 (659 aa).

8 WD repeats span residues 1–31 (MQEN…FNPH), 32–71 (TAPH…PVPL), 75–114 (GEGQ…VHRS), 117–156 (DHKD…SSTP), 160–200 (GSNQ…PYHN), 204–244 (THKA…LVKT), 246–285 (VADA…SPIK), and 289–332 (AHKT…SAGG). Phosphothreonine; by PLK1 is present on threonine 382. The disordered stretch occupies residues 383-433 (LSKEAESGKNQDFSNFDDSGKSSLGDMFSPVRDDAVVSKGGDESIGKGDGL). Serine 411 carries the phosphoserine modification. Residues 413-432 (VRDDAVVSKGGDESIGKGDG) are compositionally biased toward basic and acidic residues. Phosphoserine; by PLK1 is present on serine 426. A phosphoserine mark is found at serine 468 and serine 515. Residues 508–522 (ETGNLNASPSSNQTR) are compositionally biased toward polar residues. Residues 508–531 (ETGNLNASPSSNQTRSPEKFEKPE) are disordered. Residue threonine 549 is modified to Phosphothreonine; by CDK1. Position 636 is a phosphoserine; by PLK1 (serine 636).

As to quaternary structure, interacts with FAM29A. Interacts with HSPA1A and HSPA1B. Interacts with gamma-tubulin in a HSPA1A/B-dependent manner. Post-translationally, during mitosis, prior phosphorylation on Thr-549 by CDK1 promotes subsequent phosphorylation by PLK1 on Thr-382, Ser-426 and Ser-636. Phosphorylated NEDD1 can interact with gamma-tubulin for targeting the gamma-tubulin ring complex (gTuRC) to the centrosome, an important step for spindle formation.

The protein resides in the cytoplasm. It localises to the cytoskeleton. Its subcellular location is the microtubule organizing center. It is found in the centrosome. Its function is as follows. Required for mitosis progression. Promotes the nucleation of microtubules from the spindle. In Bos taurus (Bovine), this protein is Protein NEDD1 (NEDD1).